A 325-amino-acid polypeptide reads, in one-letter code: Tetraacyldisaccharide 4'-kinase (325 aa).

Residue 55-62 (TAGGNGKT) participates in ATP binding.

It belongs to the LpxK family.

It carries out the reaction a lipid A disaccharide + ATP = a lipid IVA + ADP + H(+). The protein operates within glycolipid biosynthesis; lipid IV(A) biosynthesis; lipid IV(A) from (3R)-3-hydroxytetradecanoyl-[acyl-carrier-protein] and UDP-N-acetyl-alpha-D-glucosamine: step 6/6. Functionally, transfers the gamma-phosphate of ATP to the 4'-position of a tetraacyldisaccharide 1-phosphate intermediate (termed DS-1-P) to form tetraacyldisaccharide 1,4'-bis-phosphate (lipid IVA). The chain is Tetraacyldisaccharide 4'-kinase from Salmonella paratyphi A (strain ATCC 9150 / SARB42).